Consider the following 174-residue polypeptide: MLNQLAIAEVGNPMLGNIIVVSGSFLILMFLLKHFAWGPISDILKKREDKIANDLDSAEKSRINSAKMEQEREQQLLASRSDAADIIKNAKESGELSRQNILKETQEEVARLKSKAQTDIMLERDTALNSVKDDVADLSLQIAAKILNKELSPEMHESLINQYIEGLGSSNETR.

A helical transmembrane segment spans residues 18–38 (IIVVSGSFLILMFLLKHFAWG).

It belongs to the ATPase B chain family. In terms of assembly, F-type ATPases have 2 components, F(1) - the catalytic core - and F(0) - the membrane proton channel. F(1) has five subunits: alpha(3), beta(3), gamma(1), delta(1), epsilon(1). F(0) has three main subunits: a(1), b(2) and c(10-14). The alpha and beta chains form an alternating ring which encloses part of the gamma chain. F(1) is attached to F(0) by a central stalk formed by the gamma and epsilon chains, while a peripheral stalk is formed by the delta and b chains.

The protein localises to the cell membrane. F(1)F(0) ATP synthase produces ATP from ADP in the presence of a proton or sodium gradient. F-type ATPases consist of two structural domains, F(1) containing the extramembraneous catalytic core and F(0) containing the membrane proton channel, linked together by a central stalk and a peripheral stalk. During catalysis, ATP synthesis in the catalytic domain of F(1) is coupled via a rotary mechanism of the central stalk subunits to proton translocation. Its function is as follows. Component of the F(0) channel, it forms part of the peripheral stalk, linking F(1) to F(0). The chain is ATP synthase subunit b from Enterococcus hirae (strain ATCC 9790 / DSM 20160 / JCM 8729 / LMG 6399 / NBRC 3181 / NCIMB 6459 / NCDO 1258 / NCTC 12367 / WDCM 00089 / R).